The primary structure comprises 414 residues: Serine hydroxymethyltransferase (414 aa).

(6S)-5,6,7,8-tetrahydrofolate-binding positions include L118 and G122 to L124. K226 is modified (N6-(pyridoxal phosphate)lysine). S353–F355 serves as a coordination point for (6S)-5,6,7,8-tetrahydrofolate.

This sequence belongs to the SHMT family. Homodimer. Pyridoxal 5'-phosphate is required as a cofactor.

It is found in the cytoplasm. It catalyses the reaction (6R)-5,10-methylene-5,6,7,8-tetrahydrofolate + glycine + H2O = (6S)-5,6,7,8-tetrahydrofolate + L-serine. The protein operates within one-carbon metabolism; tetrahydrofolate interconversion. It participates in amino-acid biosynthesis; glycine biosynthesis; glycine from L-serine: step 1/1. In terms of biological role, catalyzes the reversible interconversion of serine and glycine with tetrahydrofolate (THF) serving as the one-carbon carrier. This reaction serves as the major source of one-carbon groups required for the biosynthesis of purines, thymidylate, methionine, and other important biomolecules. Also exhibits THF-independent aldolase activity toward beta-hydroxyamino acids, producing glycine and aldehydes, via a retro-aldol mechanism. This chain is Serine hydroxymethyltransferase, found in Blochmanniella floridana.